A 474-amino-acid polypeptide reads, in one-letter code: tRNA-2-methylthio-N(6)-dimethylallyladenosine synthase (474 aa).

Positions 3–120 (KKLHIKTWGC…LPEMINHVQG (118 aa)) constitute an MTTase N-terminal domain. [4Fe-4S] cluster contacts are provided by Cys-12, Cys-49, Cys-83, Cys-157, Cys-161, and Cys-164. The Radical SAM core domain occupies 143 to 375 (RADGPTAFVS…QDRITKQAMR (233 aa)). One can recognise a TRAM domain in the interval 378–441 (RLMLGTVQRI…TNSLRGIVVR (64 aa)).

The protein belongs to the methylthiotransferase family. MiaB subfamily. Monomer. Requires [4Fe-4S] cluster as cofactor.

The protein resides in the cytoplasm. It carries out the reaction N(6)-dimethylallyladenosine(37) in tRNA + (sulfur carrier)-SH + AH2 + 2 S-adenosyl-L-methionine = 2-methylsulfanyl-N(6)-dimethylallyladenosine(37) in tRNA + (sulfur carrier)-H + 5'-deoxyadenosine + L-methionine + A + S-adenosyl-L-homocysteine + 2 H(+). Functionally, catalyzes the methylthiolation of N6-(dimethylallyl)adenosine (i(6)A), leading to the formation of 2-methylthio-N6-(dimethylallyl)adenosine (ms(2)i(6)A) at position 37 in tRNAs that read codons beginning with uridine. The sequence is that of tRNA-2-methylthio-N(6)-dimethylallyladenosine synthase from Pectobacterium atrosepticum (strain SCRI 1043 / ATCC BAA-672) (Erwinia carotovora subsp. atroseptica).